Reading from the N-terminus, the 249-residue chain is Sec-independent protein translocase protein TatC (249 aa).

The next 6 membrane-spanning stretches (helical) occupy residues 18 to 38, 69 to 89, 96 to 116, 151 to 171, 187 to 207, and 208 to 228; these read VSVGTILVAFLGCFHFWKNIF, AIVISMPIIFWQLWLFIAPGL, VILPFVFFGSGMFLMGAAFSY, LILGFGVAFELPVLAYFLAKV, IVVIFIVAAIITPPDVVSQIF, and MALPLVGLYGLSILIAKMVNP.

This sequence belongs to the TatC family. In terms of assembly, the Tat system comprises two distinct complexes: a TatABC complex, containing multiple copies of TatA, TatB and TatC subunits, and a separate TatA complex, containing only TatA subunits. Substrates initially bind to the TatABC complex, which probably triggers association of the separate TatA complex to form the active translocon.

It is found in the cell inner membrane. Functionally, part of the twin-arginine translocation (Tat) system that transports large folded proteins containing a characteristic twin-arginine motif in their signal peptide across membranes. Together with TatB, TatC is part of a receptor directly interacting with Tat signal peptides. This is Sec-independent protein translocase protein TatC from Helicobacter pylori (strain J99 / ATCC 700824) (Campylobacter pylori J99).